The chain runs to 498 residues: Acetylcholine receptor subunit alpha-type acr-16 (498 aa).

A signal peptide spans Met1 to Gly19. The Extracellular portion of the chain corresponds to Ser20–Leu230. N-linked (GlcNAc...) asparagine glycosylation is found at Asn43 and Asn93. Cystine bridges form between Cys147/Cys161 and Cys211/Cys212. The next 3 helical transmembrane spans lie at Tyr231–Thr252, Ile261–Ser279, and Phe295–Leu314. Over Asn315 to Arg472 the chain is Cytoplasmic. A helical membrane pass occupies residues Leu473–Ala493.

The protein belongs to the ligand-gated ion channel (TC 1.A.9) family. Acetylcholine receptor (TC 1.A.9.1) subfamily. As to expression, expressed in the body wall muscle.

The protein resides in the postsynaptic cell membrane. The protein localises to the cell membrane. Functionally, after binding acetylcholine, the AChR responds by an extensive change in conformation that affects all subunits and leads to opening of an ion-conducting channel across the plasma membrane. A subunit of the levamisole-insensitive nicotinic receptor. The polypeptide is Acetylcholine receptor subunit alpha-type acr-16 (acr-16) (Caenorhabditis elegans).